We begin with the raw amino-acid sequence, 97 residues long: uncharacterized protein (97 aa).

Positions 1–21 are cleaved as a signal peptide; it reads MNKKFSISLLSTILAFLLVLG. Cys-22 carries N-palmitoyl cysteine lipidation. The S-diacylglycerol cysteine moiety is linked to residue Cys-22.

This sequence to B.burgdorferi BBD15.

It is found in the cell membrane. This is an uncharacterized protein from Borreliella burgdorferi (strain ATCC 35210 / DSM 4680 / CIP 102532 / B31) (Borrelia burgdorferi).